A 133-amino-acid polypeptide reads, in one-letter code: Small ribosomal subunit protein uS11 (133 aa).

It belongs to the universal ribosomal protein uS11 family. In terms of assembly, part of the 30S ribosomal subunit. Interacts with proteins S7 and S18. Binds to IF-3.

Located on the platform of the 30S subunit, it bridges several disparate RNA helices of the 16S rRNA. Forms part of the Shine-Dalgarno cleft in the 70S ribosome. The sequence is that of Small ribosomal subunit protein uS11 from Methylibium petroleiphilum (strain ATCC BAA-1232 / LMG 22953 / PM1).